A 312-amino-acid polypeptide reads, in one-letter code: Ribosomal protein uL3 glutamine methyltransferase (312 aa).

This sequence belongs to the protein N5-glutamine methyltransferase family. PrmB subfamily.

The enzyme catalyses L-glutaminyl-[ribosomal protein uL3] + S-adenosyl-L-methionine = N(5)-methyl-L-glutaminyl-[ribosomal protein uL3] + S-adenosyl-L-homocysteine + H(+). Its function is as follows. Methylates large ribosomal subunit protein uL3 on a specific glutamine residue. The chain is Ribosomal protein uL3 glutamine methyltransferase from Xylella fastidiosa (strain Temecula1 / ATCC 700964).